We begin with the raw amino-acid sequence, 473 residues long: Bactericidal permeability-increasing protein (473 aa).

Positions 1 to 18 (MVLCCWLALVALIPMTLS) are cleaved as a signal peptide. The segment at 19–29 (INPGVKVRLTG) is central sheet, part 1. Residues 28–209 (TGKGLEYGRQ…SDLNPQLKTL (182 aa)) form an N-terminal barrel region. C153 and C192 are joined by a disulfide. Positions 211–275 (VLAKVDQYAE…INNMLYISVS (65 aa)) are central sheet, part 2. The cleavage sites for elastase stretch occupies residues 225–230 (MVSSPT). The interval 276–446 (AFTINSAAFV…LAKGYPLPTL (171 aa)) is C-terminal barrel. N-linked (GlcNAc...) asparagine glycosylation occurs at N365. Residues 453 to 472 (NTELQVLKDYMLIGTDVQFT) are central sheet, part 3.

It belongs to the BPI/LBP/Plunc superfamily. BPI/LBP family. In terms of assembly, monomer. Homodimer; disulfide-linked. As to expression, expressed in spleen. Lower expression in gill, head kidney, entire kidney, skin, intestine and blood and lowest expression in liver and muscle.

The protein resides in the secreted. Its function is as follows. The cytotoxic action of BPI is limited to many species of Gram-negative bacteria; this specificity may be explained by a strong affinity of the very basic N-terminal half for the negatively charged lipopolysaccharides that are unique to the Gram-negative bacterial outer envelope. Exhibits neutralizing capacity towards P.aeruginosa lipopolysaccharides (LPS) and has bactericidal activity against multiple drug resistant (MDR) P.aeruginosa strains derived from people with cystic fibrosis. Has antibacterial activity against E.coli, but not against S.iniae. In Sebastes schlegelii (Korean rockfish), this protein is Bactericidal permeability-increasing protein.